Here is a 230-residue protein sequence, read N- to C-terminus: Ribose-5-phosphate isomerase A (230 aa).

Substrate contacts are provided by residues 32–35 (TGST), 85–88 (DGAD), and 98–101 (KGGG). Catalysis depends on Glu107, which acts as the Proton acceptor. Lys125 is a binding site for substrate.

The protein belongs to the ribose 5-phosphate isomerase family. Homodimer.

The enzyme catalyses aldehydo-D-ribose 5-phosphate = D-ribulose 5-phosphate. It participates in carbohydrate degradation; pentose phosphate pathway; D-ribose 5-phosphate from D-ribulose 5-phosphate (non-oxidative stage): step 1/1. Catalyzes the reversible conversion of ribose-5-phosphate to ribulose 5-phosphate. This is Ribose-5-phosphate isomerase A from Burkholderia vietnamiensis (strain G4 / LMG 22486) (Burkholderia cepacia (strain R1808)).